A 933-amino-acid chain; its full sequence is Isoleucine--tRNA ligase (933 aa).

A 'HIGH' region motif is present at residues 57-67; sequence PYANGNIHVGH. Glu-554 serves as a coordination point for L-isoleucyl-5'-AMP. The short motif at 595-599 is the 'KMSKS' region element; it reads KMSKS. Residue Lys-598 participates in ATP binding.

Belongs to the class-I aminoacyl-tRNA synthetase family. IleS type 1 subfamily. In terms of assembly, monomer.

The protein resides in the cytoplasm. The enzyme catalyses tRNA(Ile) + L-isoleucine + ATP = L-isoleucyl-tRNA(Ile) + AMP + diphosphate. In terms of biological role, catalyzes the attachment of isoleucine to tRNA(Ile). As IleRS can inadvertently accommodate and process structurally similar amino acids such as valine, to avoid such errors it has two additional distinct tRNA(Ile)-dependent editing activities. One activity is designated as 'pretransfer' editing and involves the hydrolysis of activated Val-AMP. The other activity is designated 'posttransfer' editing and involves deacylation of mischarged Val-tRNA(Ile). In Streptococcus pyogenes serotype M1, this protein is Isoleucine--tRNA ligase.